Here is a 432-residue protein sequence, read N- to C-terminus: MTELISIKDSSKHVDQEVKMHVWLTDKRSSGKIIFLQLRDGTAFFQGVIRKNDVSEEVFEAAKSLRQEASFYITGTVHEDKRSHFGYEIQISDLEIVSNNEGYPIGNKEHGVDFLLDNRHLWLRSKRPFAIMQIRNTMFKATVDFFEKEGFIKFDAPIFMHSAPEGTTQLFHVEYFNNDAYLSQSGQLYGEAGAMAYGKIFTFGPTFRAEESKGRRHMTEFWMMEPEMAWMHQDESLDIQERYLAYMVKQVLENNEYELKILGRDPEKLRPTTEGNFTRLSYDDAIKMLQEAGRDIKWGDDFGAPDEGYISEQFDRPVFIVNYPTTIKPFYMKKNPDNPKEYLCADVIAPEGYGEIFGGSEREGNYEILKQQIEEAGLNLEDYQWYLDLRKFGGVPHSGFGMGFERTIAWICKLDHIREAIPFPRLINRMQP.

Belongs to the class-II aminoacyl-tRNA synthetase family. In terms of assembly, homodimer.

The protein localises to the cytoplasm. The enzyme catalyses tRNA(Asn) + L-asparagine + ATP = L-asparaginyl-tRNA(Asn) + AMP + diphosphate + H(+). This chain is Asparagine--tRNA ligase, found in Lactobacillus johnsonii (strain CNCM I-12250 / La1 / NCC 533).